Reading from the N-terminus, the 309-residue chain is MANLTIVTEFILMGFSTNKNMCILHSILFLLIYLCALMGNVLIIMITTLDHHLHTPVYFFLKNLSFLDLCLISVTAPKSIANSLIHNNSISFLGCVSQVFLLLSSASAELLLLTVMSFDRYTAICHPLHYDVIMDRSTCVQRATVSWLYGGLIAVMHTAGTFSLSYCGSNMVHQFFCDIPQLLAISCSENLIREIALILINVVLDFCCFIVIIITYVHVFSTVKKIPSTEGQSKAYSICLPHLLVVLFLSTGFIAYLKPASESPSILDAVISVFYTMLPPTFNPIIYSLRNKAIKVALGMLIKGKLTKK.

The Extracellular portion of the chain corresponds to 1 to 23 (MANLTIVTEFILMGFSTNKNMCI). The N-linked (GlcNAc...) asparagine glycan is linked to Asn3. A helical transmembrane segment spans residues 24–44 (LHSILFLLIYLCALMGNVLII). Topologically, residues 45-52 (MITTLDHH) are cytoplasmic. Residues 53-73 (LHTPVYFFLKNLSFLDLCLIS) form a helical membrane-spanning segment. Topologically, residues 74–97 (VTAPKSIANSLIHNNSISFLGCVS) are extracellular. The N-linked (GlcNAc...) asparagine glycan is linked to Asn87. Cys95 and Cys187 form a disulfide bridge. Residues 98 to 118 (QVFLLLSSASAELLLLTVMSF) form a helical membrane-spanning segment. Residues 119 to 131 (DRYTAICHPLHYD) lie on the Cytoplasmic side of the membrane. Residues 132–152 (VIMDRSTCVQRATVSWLYGGL) form a helical membrane-spanning segment. The Extracellular segment spans residues 153-194 (IAVMHTAGTFSLSYCGSNMVHQFFCDIPQLLAISCSENLIRE). The helical transmembrane segment at 195–215 (IALILINVVLDFCCFIVIIIT) threads the bilayer. The Cytoplasmic portion of the chain corresponds to 216-235 (YVHVFSTVKKIPSTEGQSKA). The helical transmembrane segment at 236–255 (YSICLPHLLVVLFLSTGFIA) threads the bilayer. The Extracellular segment spans residues 256–268 (YLKPASESPSILD). A helical transmembrane segment spans residues 269–289 (AVISVFYTMLPPTFNPIIYSL). At 290–309 (RNKAIKVALGMLIKGKLTKK) the chain is on the cytoplasmic side.

This sequence belongs to the G-protein coupled receptor 1 family.

It localises to the cell membrane. Its function is as follows. Odorant receptor. The chain is Olfactory receptor 14A16 (OR14A16) from Homo sapiens (Human).